Here is a 283-residue protein sequence, read N- to C-terminus: Protein FAM170B (283 aa).

Positions Met1–Glu11 are enriched in basic and acidic residues. Disordered regions lie at residues Met1 to Gly58 and Ala246 to Gln283.

This sequence belongs to the FAM170 family. As to quaternary structure, interacts with GOPC. In terms of tissue distribution, exclusively expressed in adult testis.

It is found in the cytoplasmic vesicle. The protein resides in the secretory vesicle. Its subcellular location is the acrosome. The protein localises to the acrosome outer membrane. In terms of biological role, plays a role in fertilization through the acrosome reaction. The chain is Protein FAM170B from Homo sapiens (Human).